A 368-amino-acid polypeptide reads, in one-letter code: Quinolinate synthase (368 aa).

Iminosuccinate-binding residues include His46 and Ser63. Cys110 is a [4Fe-4S] cluster binding site. Iminosuccinate-binding positions include 141–143 (YVN) and Ser162. Residue Cys230 participates in [4Fe-4S] cluster binding. Iminosuccinate contacts are provided by residues 256 to 258 (HPE) and Thr273. Cys320 contributes to the [4Fe-4S] cluster binding site.

The protein belongs to the quinolinate synthase family. Type 3 subfamily. Requires [4Fe-4S] cluster as cofactor.

It localises to the cytoplasm. It carries out the reaction iminosuccinate + dihydroxyacetone phosphate = quinolinate + phosphate + 2 H2O + H(+). Its pathway is cofactor biosynthesis; NAD(+) biosynthesis; quinolinate from iminoaspartate: step 1/1. In terms of biological role, catalyzes the condensation of iminoaspartate with dihydroxyacetone phosphate to form quinolinate. This chain is Quinolinate synthase, found in Bacillus anthracis (strain A0248).